Here is a 703-residue protein sequence, read N- to C-terminus: Probable ATP-dependent RNA helicase vasa-like (703 aa).

Disordered regions lie at residues 1–22 (MSDDWDETDAAPASDWNIESFG), 35–73 (NTGNAFNDGEGGFDEGSQSNFDDPFRSGGGGFGGRGRGG), and 88–167 (RDCP…RGCF). Positions 61 to 73 (SGGGGFGGRGRGG) are enriched in gly residues. The segment at 77-92 (CFKCGDEGHMARDCPS) adopts a CCHC-type 1 zinc-finger fold. Residues 146-155 (FGFGSGSGSR) are compositionally biased toward gly residues. 2 CCHC-type zinc fingers span residues 166–181 (CFKCGEEGHMSRDCPS) and 189–204 (CFKCGQEGHNARDCPN). A Q motif motif is present at residues 261 to 289 (ESFQSMNLRPLLLENIVKAGYGCPTPVQK). A Helicase ATP-binding domain is found at 292-475 (IPNVMNGRDI…SAFLNNYLFV (184 aa)). 305 to 312 (AQTGSGKT) provides a ligand contact to ATP. The DEAD box motif lies at 419-422 (DEAD). Residues 506-651 (MCEEILISAD…TIPDWLTQKA (146 aa)) enclose the Helicase C-terminal domain. The interval 676–703 (GGGRGWEKNQASSFLGGPSESNVDEEWD) is disordered.

This sequence belongs to the DEAD box helicase family. DDX4/VASA subfamily. In terms of tissue distribution, expressed in ovaries and testis. Not expressed in somatic tissue of the ovaries including follicle cells, muscle and connective tissue.

The protein localises to the cytoplasm. It localises to the nucleus. Its subcellular location is the nucleolus. It carries out the reaction ATP + H2O = ADP + phosphate + H(+). Functionally, involved in translational control mechanisms operating in early stages of oogenesis. Required maternally in many stages of oogenesis, including cystocyte differentiation, oocyte differentiation, and specification of anterior-posterior polarity in the developing cysts. Essential for the formation and/or structural integrity of perinuclear nuage particles during germ cell formation. In Penaeus vannamei (Whiteleg shrimp), this protein is Probable ATP-dependent RNA helicase vasa-like.